We begin with the raw amino-acid sequence, 500 residues long: L-arabinose isomerase (500 aa).

Positions 306, 333, 350, and 450 each coordinate Mn(2+).

This sequence belongs to the arabinose isomerase family. In terms of assembly, homohexamer. Mn(2+) serves as cofactor.

The enzyme catalyses beta-L-arabinopyranose = L-ribulose. Its pathway is carbohydrate degradation; L-arabinose degradation via L-ribulose; D-xylulose 5-phosphate from L-arabinose (bacterial route): step 1/3. Catalyzes the conversion of L-arabinose to L-ribulose. This chain is L-arabinose isomerase, found in Escherichia coli (strain 55989 / EAEC).